Here is a 330-residue protein sequence, read N- to C-terminus: Fructose-1,6-bisphosphatase class 1 (330 aa).

Residues Glu-84, Asp-103, Leu-105, and Asp-106 each coordinate Mg(2+). Substrate-binding positions include 106–109, Asn-196, and Lys-262; that span reads DGSS. Glu-268 is a Mg(2+) binding site.

The protein belongs to the FBPase class 1 family. As to quaternary structure, homotetramer. It depends on Mg(2+) as a cofactor.

The protein resides in the cytoplasm. The catalysed reaction is beta-D-fructose 1,6-bisphosphate + H2O = beta-D-fructose 6-phosphate + phosphate. Its pathway is carbohydrate biosynthesis; gluconeogenesis. The protein is Fructose-1,6-bisphosphatase class 1 of Shewanella sp. (strain ANA-3).